The sequence spans 358 residues: DNA replication and repair protein RecF (358 aa).

33-40 (GENGAGKT) serves as a coordination point for ATP.

Belongs to the RecF family.

The protein localises to the cytoplasm. The RecF protein is involved in DNA metabolism; it is required for DNA replication and normal SOS inducibility. RecF binds preferentially to single-stranded, linear DNA. It also seems to bind ATP. The chain is DNA replication and repair protein RecF from Deinococcus geothermalis (strain DSM 11300 / CIP 105573 / AG-3a).